Here is a 303-residue protein sequence, read N- to C-terminus: UDP-3-O-acyl-N-acetylglucosamine deacetylase (303 aa).

Residues histidine 78, histidine 237, and aspartate 241 each coordinate Zn(2+). Histidine 264 (proton donor) is an active-site residue.

Belongs to the LpxC family. It depends on Zn(2+) as a cofactor.

It catalyses the reaction a UDP-3-O-[(3R)-3-hydroxyacyl]-N-acetyl-alpha-D-glucosamine + H2O = a UDP-3-O-[(3R)-3-hydroxyacyl]-alpha-D-glucosamine + acetate. Its pathway is glycolipid biosynthesis; lipid IV(A) biosynthesis; lipid IV(A) from (3R)-3-hydroxytetradecanoyl-[acyl-carrier-protein] and UDP-N-acetyl-alpha-D-glucosamine: step 2/6. Catalyzes the hydrolysis of UDP-3-O-myristoyl-N-acetylglucosamine to form UDP-3-O-myristoylglucosamine and acetate, the committed step in lipid A biosynthesis. The polypeptide is UDP-3-O-acyl-N-acetylglucosamine deacetylase (Xanthomonas axonopodis pv. citri (strain 306)).